Consider the following 629-residue polypeptide: Probable potassium transport system protein Kup 3 (629 aa).

Transmembrane regions (helical) follow at residues 20–40 (LSLSALGIVYGDIGTSPLYTF), 61–81 (VSLIIWTLIIIASVKYISFAL), 106–126 (PFIIAVGLMGAALIYGDGTIT), 143–163 (PSLKYYVLPIAITILITLFAI), 171–191 (IGKAFGPVMAFWFLTIGILGA), 212–232 (FLFSNGATGFFILCGVFLCVT), 253–273 (WFGLAFPSLIFNYLGQAALVL), 291–311 (FLLPLIILSTVATIIASQAII), 343–363 (IYIGVVNWFLMLATLGLTIGF), 372–392 (AYGIAVSATMLCTTVLLFIAL), 400–420 (IITSGLVAGLFMIVDASFFAA), and 425–445 (FINGGYIPITLAIIIYSMMYI).

Belongs to the HAK/KUP transporter (TC 2.A.72) family.

The protein localises to the cell inner membrane. It carries out the reaction K(+)(in) + H(+)(in) = K(+)(out) + H(+)(out). In terms of biological role, transport of potassium into the cell. Likely operates as a K(+):H(+) symporter. The polypeptide is Probable potassium transport system protein Kup 3 (Legionella pneumophila (strain Lens)).